The chain runs to 504 residues: Histidine ammonia-lyase (504 aa).

Positions 142-144 (ASG) form a cross-link, 5-imidazolinone (Ala-Gly). Residue S143 is modified to 2,3-didehydroalanine (Ser).

Belongs to the PAL/histidase family. Contains an active site 4-methylidene-imidazol-5-one (MIO), which is formed autocatalytically by cyclization and dehydration of residues Ala-Ser-Gly.

It localises to the cytoplasm. The enzyme catalyses L-histidine = trans-urocanate + NH4(+). Its pathway is amino-acid degradation; L-histidine degradation into L-glutamate; N-formimidoyl-L-glutamate from L-histidine: step 1/3. The chain is Histidine ammonia-lyase from Staphylococcus aureus (strain MRSA252).